We begin with the raw amino-acid sequence, 246 residues long: Putative outer membrane protein YiaT (246 aa).

The first 21 residues, methionine 1 to alanine 21, serve as a signal peptide directing secretion.

This sequence belongs to the MipA/OmpV family.

It localises to the cell outer membrane. This is Putative outer membrane protein YiaT (yiaT) from Escherichia coli (strain K12).